The chain runs to 153 residues: Proline-rich membrane anchor 1 (153 aa).

The N-terminal stretch at 1–35 (MLLRDLVPRHGCCWPSLLLHCALHPLWGLVQVTHA) is a signal peptide. Topologically, residues 36–92 (EPQKSCSKVTDSCQHICQCRPPPPLPPPPPPPPPPRLLSAPAPNSTSCPAEDSWWSG) are extracellular. The 15-residue stretch at 56-70 (PPPPLPPPPPPPPPP) folds into the PRAD domain. The segment covering 59–71 (PLPPPPPPPPPPR) has biased composition (pro residues). The segment at 59-79 (PLPPPPPPPPPPRLLSAPAPN) is disordered. Asn-79 carries an N-linked (GlcNAc...) asparagine glycan. A helical transmembrane segment spans residues 93–113 (LVIIVAVVCASLVFLTVLVII). Residues 114-153 (CYKAIKRKPLRKDENGTSVAEYPMSSSQSHKGVDVNAAVV) are Cytoplasmic-facing. Residues 129 to 153 (GTSVAEYPMSSSQSHKGVDVNAAVV) are disordered.

Interacts with ACHE, probably through disulfide bonds. Predominantly expressed in the central nervous system, including in the brain. Also expressed in muscle, heart and kidney. Isoform 1 may be predominant in the cortex and striatum, while isoform 2 is more abundant in the cerebellum.

The protein localises to the cell membrane. Its subcellular location is the cell junction. The protein resides in the synapse. Functionally, required to anchor acetylcholinesterase (ACHE) to the basal lamina of the neuromuscular junction and to the membrane of neuronal synapses in brain. Also able to organize ACHE into tetramers. This Mus musculus (Mouse) protein is Proline-rich membrane anchor 1 (Prima1).